The chain runs to 28 residues: NLYQFKNMIKCTNTRMWWSFTNAGCYDG.

Belongs to the phospholipase A2 family. Group I subfamily. It depends on Ca(2+) as a cofactor. As to expression, expressed by the venom gland.

It is found in the secreted. It catalyses the reaction a 1,2-diacyl-sn-glycero-3-phosphocholine + H2O = a 1-acyl-sn-glycero-3-phosphocholine + a fatty acid + H(+). In terms of biological role, snake venom phospholipase A2 (PLA2) that inhibits neuromuscular transmission by blocking acetylcholine release from the nerve termini. PLA2 catalyzes the calcium-dependent hydrolysis of the 2-acyl groups in 3-sn-phosphoglycerides. The sequence is that of Phospholipase A2 3 from Micrurus nigrocinctus (Central American coral snake).